The following is a 451-amino-acid chain: Clusterin (451 aa).

A signal peptide spans 1–18 (MELPLLALLSLGLVCQGG). Intrachain disulfides connect cysteine 98-cysteine 314, cysteine 109-cysteine 306, cysteine 112-cysteine 303, cysteine 117-cysteine 296, and cysteine 125-cysteine 286. 6 N-linked (GlcNAc...) asparagine glycosylation sites follow: asparagine 99, asparagine 141, asparagine 278, asparagine 355, asparagine 375, and asparagine 447.

Belongs to the clusterin family. In terms of assembly, antiparallel disulfide-linked heterodimer of an alpha chain and a beta chain. Self-associates and forms higher oligomers. Interacts with a broad range of misfolded proteins. Post-translationally, proteolytically cleaved on its way through the secretory system, probably within the Golgi lumen. In terms of processing, polyubiquitinated, leading to proteasomal degradation.

It is found in the secreted. Its subcellular location is the cytoplasmic vesicle. The protein localises to the secretory vesicle. It localises to the chromaffin granule. The protein resides in the nucleus. It is found in the cytoplasm. Its subcellular location is the mitochondrion membrane. The protein localises to the cytosol. It localises to the endoplasmic reticulum. Its function is as follows. Functions as extracellular chaperone that prevents aggregation of nonnative proteins. Prevents stress-induced aggregation of blood plasma proteins. Does not require ATP. Maintains partially unfolded proteins in a state appropriate for subsequent refolding by other chaperones, such as HSPA8/HSC70. Does not refold proteins by itself. Binding to cell surface receptors triggers internalization of the chaperone-client complex and subsequent lysosomal or proteasomal degradation. When secreted, protects cells against apoptosis and against cytolysis by complement: inhibits assembly of the complement membrane attack complex (MAC) by preventing polymerization of C9 pore component of the MAC complex. Intracellular forms interact with ubiquitin and SCF (SKP1-CUL1-F-box protein) E3 ubiquitin-protein ligase complexes and promote the ubiquitination and subsequent proteasomal degradation of target proteins. Modulates NF-kappa-B transcriptional activity. Promotes apoptosis when in the nucleus. Inhibits apoptosis when associated with the mitochondrial membrane by interference with BAX-dependent release of cytochrome c into the cytoplasm. Plays a role in the regulation of cell proliferation. The protein is Clusterin (CLU) of Coturnix japonica (Japanese quail).